The primary structure comprises 107 residues: Ig kappa chain V-VI region J539 (107 aa).

Positions 1–23 (EIVLTQSPAITAASLGQKVTITC) are framework-1. A disulfide bridge connects residues Cys23 and Cys87. Positions 24-33 (SASSSVSSLH) are complementarity-determining-1. Residues 34–48 (WYQQKSGTSPKPWIY) are framework-2. Residues 49–55 (EISKLAS) are complementarity-determining-2. The segment at 56–87 (GVPARFSGSGSGTSYSLTINTMEAEDAAIYYC) is framework-3. Residues 88–96 (QQWTYPLIT) form a complementarity-determining-3 region. The tract at residues 97 to 106 (FGAGTKLELK) is framework-4.

The polypeptide is Ig kappa chain V-VI region J539 (Mus musculus (Mouse)).